The sequence spans 369 residues: Homoserine O-succinyltransferase (369 aa).

The disordered stretch occupies residues 1 to 21; it reads MVRIVPSARRTRAPAKLDGRS. In terms of domain architecture, AB hydrolase-1 spans 86–350; sequence VVFVAGGISA…PFGHDAFLKE (265 aa). The important for substrate specificity stretch occupies residues 92–95; sequence GISA. Ser-172 serves as the catalytic Nucleophile. Residue Arg-233 coordinates substrate. Residues Asp-314 and His-344 contribute to the active site. Residue Asp-345 coordinates substrate.

Belongs to the AB hydrolase superfamily. MetX family. In terms of assembly, homodimer.

The protein localises to the cytoplasm. The enzyme catalyses L-homoserine + succinyl-CoA = O-succinyl-L-homoserine + CoA. The protein operates within amino-acid biosynthesis; L-methionine biosynthesis via de novo pathway; O-succinyl-L-homoserine from L-homoserine: step 1/1. In terms of biological role, transfers a succinyl group from succinyl-CoA to L-homoserine, forming succinyl-L-homoserine. The chain is Homoserine O-succinyltransferase from Xanthomonas campestris pv. campestris (strain ATCC 33913 / DSM 3586 / NCPPB 528 / LMG 568 / P 25).